A 220-amino-acid polypeptide reads, in one-letter code: Glycerol-3-phosphate acyltransferase (220 aa).

5 helical membrane-spanning segments follow: residues 4 to 24 (LTIL…AVLV), 53 to 73 (VAAL…VYLA), 80 to 100 (PVYL…PIFF), 116 to 136 (MPIG…VLLV), and 138 to 158 (GYSS…TYLI). The interval 193-220 (WGRQAQRRQEEVGEMDDVAQKRDERDKK) is disordered. Residues 210-220 (VAQKRDERDKK) are compositionally biased toward basic and acidic residues.

It belongs to the PlsY family. As to quaternary structure, probably interacts with PlsX.

The protein localises to the cell inner membrane. It carries out the reaction an acyl phosphate + sn-glycerol 3-phosphate = a 1-acyl-sn-glycero-3-phosphate + phosphate. It participates in lipid metabolism; phospholipid metabolism. In terms of biological role, catalyzes the transfer of an acyl group from acyl-phosphate (acyl-PO(4)) to glycerol-3-phosphate (G3P) to form lysophosphatidic acid (LPA). This enzyme utilizes acyl-phosphate as fatty acyl donor, but not acyl-CoA or acyl-ACP. This is Glycerol-3-phosphate acyltransferase from Aeromonas salmonicida (strain A449).